We begin with the raw amino-acid sequence, 266 residues long: Family of serine hydrolases 3 (266 aa).

Active-site charge relay system residues include Ser117, Asp180, and His209.

This sequence belongs to the AB hydrolase 3 family.

Serine hydrolase of unknown specificity. This is Family of serine hydrolases 3 (FSH3) from Saccharomyces cerevisiae (strain ATCC 204508 / S288c) (Baker's yeast).